We begin with the raw amino-acid sequence, 48 residues long: Phosphatidylserine decarboxylase proenzyme (48 aa).

The protein belongs to the phosphatidylserine decarboxylase family. Type 1 subfamily. The cofactor is pyruvate.

The catalysed reaction is a 1,2-diacyl-sn-glycero-3-phospho-L-serine + H(+) = a 1,2-diacyl-sn-glycero-3-phosphoethanolamine + CO2. Its pathway is phospholipid metabolism; phosphatidylethanolamine biosynthesis; phosphatidylethanolamine from CDP-diacylglycerol: step 2/2. The chain is Phosphatidylserine decarboxylase proenzyme (psd) from Azotobacter vinelandii.